The primary structure comprises 219 residues: uncharacterized protein (219 aa).

Basic and acidic residues-rich tracts occupy residues 1 to 20 (METP…ESLR), 30 to 39 (AGRELVELRV), and 156 to 170 (QEVR…ELQR). The disordered stretch occupies residues 1–195 (METPIEREIR…PSLTASRGDG (195 aa)).

It belongs to the MISP family.

This is an uncharacterized protein from Homo sapiens (Human).